Consider the following 217-residue polypeptide: External core antigen (217 aa).

Residues 1–20 (MYLFHLCLVFACVSCPTVQA) form the signal peptide. Positions 26-28 (GWL) are HBEAG. Over residues 181–210 (RRGSARVVRSPRRRTPSPRRRRSQSPRRRP) the composition is skewed to basic residues. A disordered region spans residues 181–217 (RRGSARVVRSPRRRTPSPRRRRSQSPRRRPQSPASNC). A 1; half-length repeat occupies 190–196 (SPRRRTP). The tract at residues 190-211 (SPRRRTPSPRRRRSQSPRRRPQ) is 3 X 8 AA approximate repeats of S-P-R-R-R-R-[PS]-Q. The propeptide occupies 190 to 217 (SPRRRTPSPRRRRSQSPRRRPQSPASNC). Tandem repeats lie at residues 197 to 204 (SPRRRRSQ) and 205 to 211 (SPRRRPQ).

This sequence belongs to the orthohepadnavirus precore antigen family. Homodimerizes. Phosphorylated. In terms of processing, cleaved by host furin.

The protein resides in the secreted. The protein localises to the host nucleus. May regulate immune response to the intracellular capsid in acting as a T-cell tolerogen, by having an immunoregulatory effect which prevents destruction of infected cells by cytotoxic T-cells. This immune regulation may predispose to chronicity during perinatal infections and prevent severe liver injury during adult infections. The chain is External core antigen from Urocitellus parryii kennicottii (ASHV).